A 1088-amino-acid polypeptide reads, in one-letter code: Ran-binding protein 17 (1088 aa).

Alanine 2 bears the N-acetylalanine mark. Serine 569 carries the post-translational modification Phosphoserine.

Belongs to the exportin family. Binds to nucleoporins and the GTP-bound form of Ran. Highly expressed in primary spermatocytes and very weakly in pancreas.

Its subcellular location is the cytoplasm. The protein localises to the nucleus. It is found in the nuclear pore complex. Functionally, may function as a nuclear transport receptor. This Mus musculus (Mouse) protein is Ran-binding protein 17 (Ranbp17).